The primary structure comprises 476 residues: H2.0-like homeobox protein (476 aa).

Disordered regions lie at residues 120 to 169, 328 to 401, and 413 to 476; these read QHLP…PSSK, WRHS…HQTT, and TASS…LAGL. 2 stretches are compositionally biased toward low complexity: residues 123–134 and 158–168; these read PQQSPTQQQQPQ and HHSGSAPAPSS. A DNA-binding region (homeobox) is located at residues 273 to 332; that stretch reads RSWSRAVFSNLQRKGLEKRFEIQKYVTKPDRKQLAAMLGLTDAQVKVWFQNRRMKWRHSK. Basic and acidic residues-rich tracts occupy residues 331–346 and 355–368; these read SKEA…EAGE and EGER…RSEG. Positions 369–379 are enriched in acidic residues; the sequence is EAESESSDSES. A compositionally biased stretch (basic and acidic residues) spans 386 to 397; that stretch reads DTERTEGTERSL. The segment covering 413 to 434 has biased composition (low complexity); it reads TASSSTSGSSFSFSSTSSLGSG. Polar residues-rich tracts occupy residues 435-446 and 455-467; these read NTHVGSASSLGG and HQPS…QSPE.

This sequence belongs to the H2.0 homeobox family. In terms of tissue distribution, expressed in Th1 cells, CD8-positive T-cells, B-cells and NK cells.

It is found in the nucleus. Its function is as follows. Transcription factor required for TBX21/T-bet-dependent maturation of Th1 cells as well as maintenance of Th1-specific gene expression. Involved in embryogenesis and hematopoiesis. This is H2.0-like homeobox protein (Hlx) from Mus musculus (Mouse).